Consider the following 386-residue polypeptide: 5-amino-6-(D-ribitylamino)uracil--L-tyrosine 4-hydroxyphenyl transferase (386 aa).

Positions Val-56–Asp-303 constitute a Radical SAM core domain. Residues Cys-70, Cys-74, and Cys-77 each contribute to the [4Fe-4S] cluster site.

Belongs to the radical SAM superfamily. CofH family. In terms of assembly, consists of two subunits, CofG and CofH. The cofactor is [4Fe-4S] cluster.

The catalysed reaction is 5-amino-6-(D-ribitylamino)uracil + L-tyrosine + S-adenosyl-L-methionine = 5-amino-5-(4-hydroxybenzyl)-6-(D-ribitylimino)-5,6-dihydrouracil + 2-iminoacetate + 5'-deoxyadenosine + L-methionine + H(+). The protein operates within cofactor biosynthesis; coenzyme F0 biosynthesis. Functionally, catalyzes the radical-mediated synthesis of 5-amino-5-(4-hydroxybenzyl)-6-(D-ribitylimino)-5,6-dihydrouracil from 5-amino-6-(D-ribitylamino)uracil and L-tyrosine. In Synechococcus elongatus (strain ATCC 33912 / PCC 7942 / FACHB-805) (Anacystis nidulans R2), this protein is 5-amino-6-(D-ribitylamino)uracil--L-tyrosine 4-hydroxyphenyl transferase.